Here is a 350-residue protein sequence, read N- to C-terminus: Glutamyl-tRNA reductase (350 aa).

Substrate contacts are provided by residues 53 to 56, serine 105, 110 to 112, and glutamine 116; these read TCNR and ETQ. The active-site Nucleophile is the cysteine 54. An NADP(+)-binding site is contributed by 185–190; it reads GAGETA.

This sequence belongs to the glutamyl-tRNA reductase family. In terms of assembly, homodimer.

The enzyme catalyses (S)-4-amino-5-oxopentanoate + tRNA(Glu) + NADP(+) = L-glutamyl-tRNA(Glu) + NADPH + H(+). Its pathway is porphyrin-containing compound metabolism; protoporphyrin-IX biosynthesis; 5-aminolevulinate from L-glutamyl-tRNA(Glu): step 1/2. In terms of biological role, catalyzes the NADPH-dependent reduction of glutamyl-tRNA(Glu) to glutamate 1-semialdehyde (GSA). The polypeptide is Glutamyl-tRNA reductase (Deinococcus radiodurans (strain ATCC 13939 / DSM 20539 / JCM 16871 / CCUG 27074 / LMG 4051 / NBRC 15346 / NCIMB 9279 / VKM B-1422 / R1)).